A 142-amino-acid polypeptide reads, in one-letter code: Transcriptional regulator MraZ (142 aa).

SpoVT-AbrB domains lie at 5-51 (SSAL…PRPE) and 77-120 (AQDV…DAAS).

It belongs to the MraZ family. As to quaternary structure, forms oligomers.

Its subcellular location is the cytoplasm. It localises to the nucleoid. The polypeptide is Transcriptional regulator MraZ (Bordetella bronchiseptica (strain ATCC BAA-588 / NCTC 13252 / RB50) (Alcaligenes bronchisepticus)).